We begin with the raw amino-acid sequence, 758 residues long: MTTLHFSGFPRVGAFRELKFAQEKYWRKEISEQELLAVAKDLREKNWKHQAAANADFVAVGDFTFYDHILDLQVATGAIPARFGFDSQNLSLEQFFQLARGNKDQFAIEMTKWFDTNYHYLVPEFHADTEFKANAKHYVQQLQEAQALGLKAKPTVVGPLTFLWVGKEKGTVEFNRLSLLQKLLPVYVEILNALVEAGAEWIQIDEPALTVDLPKEWVEAYKDVYATLSKVSAKILLSTYFGSVAEHAALLKSLPVDGLHIDLVRAPEQLDAFADYDKVLSAGIIDGRNIWRANLNKVLETVEPLQAKLGDRLWISSSCSLLHTPFDLSVEEKLKANKPDLYSWLAFTLQKTQELRVLKAALNEGRDSVAEELAASQAAADSRANSSEIHRADVAKRLADLPANADQRKSPFADRIKAQQAWLNLPLLPTTNIGSFPQTTEIRQARAAFKKGELSAADYEAAMKKEIALVVEEQEKLDLDVLVHGEAERNDMVEYFGELLSGFAFTQYGWVQSYGSRCVKPPIIFGDVSRPEAMTVAWSTYAQSLTKRPMKGMLTGPVTILQWSFVRNDIPRSTVCKQIALALNDEVLDLEKAGIKVIQIDEPAIREGLPLKRADWDAYLNWAGESFRLSSAGCEDSTQIHTHMCYSEFNDILPAIAAMDADVITIETSRSDMELLTAFGEFKYPNDIGPGVYDIHSPRVPTEAEVEHLLRKAIEVVPVERLWVNPDCGLKTRGWKETLEQLQVMMNVTHKLRAELAK.

5-methyltetrahydropteroyltri-L-glutamate is bound by residues 16-19 and Lys112; that span reads RELK. L-homocysteine is bound by residues 433-435 and Glu486; that span reads IGS. L-methionine contacts are provided by residues 433-435 and Glu486; that span reads IGS. Residues 517-518 and Trp563 contribute to the 5-methyltetrahydropteroyltri-L-glutamate site; that span reads RC. Position 601 (Asp601) interacts with L-homocysteine. Asp601 is an L-methionine binding site. Glu607 contacts 5-methyltetrahydropteroyltri-L-glutamate. His643, Cys645, and Glu667 together coordinate Zn(2+). His696 serves as the catalytic Proton donor. Position 728 (Cys728) interacts with Zn(2+).

The protein belongs to the vitamin-B12 independent methionine synthase family. Zn(2+) serves as cofactor.

It carries out the reaction 5-methyltetrahydropteroyltri-L-glutamate + L-homocysteine = tetrahydropteroyltri-L-glutamate + L-methionine. It functions in the pathway amino-acid biosynthesis; L-methionine biosynthesis via de novo pathway; L-methionine from L-homocysteine (MetE route): step 1/1. Its function is as follows. Catalyzes the transfer of a methyl group from 5-methyltetrahydrofolate to homocysteine resulting in methionine formation. This Neisseria meningitidis serogroup C / serotype 2a (strain ATCC 700532 / DSM 15464 / FAM18) protein is 5-methyltetrahydropteroyltriglutamate--homocysteine methyltransferase.